A 317-amino-acid polypeptide reads, in one-letter code: Transaldolase (317 aa).

Residue Lys-132 is the Schiff-base intermediate with substrate of the active site.

This sequence belongs to the transaldolase family. Type 1 subfamily. Homodimer.

It localises to the cytoplasm. The catalysed reaction is D-sedoheptulose 7-phosphate + D-glyceraldehyde 3-phosphate = D-erythrose 4-phosphate + beta-D-fructose 6-phosphate. It functions in the pathway carbohydrate degradation; pentose phosphate pathway; D-glyceraldehyde 3-phosphate and beta-D-fructose 6-phosphate from D-ribose 5-phosphate and D-xylulose 5-phosphate (non-oxidative stage): step 2/3. Transaldolase is important for the balance of metabolites in the pentose-phosphate pathway. The sequence is that of Transaldolase from Shewanella frigidimarina (strain NCIMB 400).